A 398-amino-acid chain; its full sequence is Acetate kinase (398 aa).

Asn10 contributes to the Mg(2+) binding site. Residue Lys17 participates in ATP binding. Residue Arg89 coordinates substrate. Asp148 acts as the Proton donor/acceptor in catalysis. ATP is bound by residues 208–212 (HLGNG), 283–285 (DCR), and 331–335 (GIGEN). Residue Glu385 coordinates Mg(2+).

It belongs to the acetokinase family. In terms of assembly, homodimer. Mg(2+) is required as a cofactor. The cofactor is Mn(2+).

The protein resides in the cytoplasm. It catalyses the reaction acetate + ATP = acetyl phosphate + ADP. The protein operates within metabolic intermediate biosynthesis; acetyl-CoA biosynthesis; acetyl-CoA from acetate: step 1/2. In terms of biological role, catalyzes the formation of acetyl phosphate from acetate and ATP. Can also catalyze the reverse reaction. The chain is Acetate kinase from Histophilus somni (strain 2336) (Haemophilus somnus).